The following is a 387-amino-acid chain: Chorismate synthase (387 aa).

NADP(+) is bound by residues Arg39 and Arg45. Residues 92 to 113 (PVEEGSEEKRRVSRPRPGHADL) are disordered. Residues 130–132 (RSS), 250–251 (QA), Gly295, 310–314 (KPIPT), and Arg336 contribute to the FMN site.

Belongs to the chorismate synthase family. As to quaternary structure, homotetramer. Requires FMNH2 as cofactor.

The enzyme catalyses 5-O-(1-carboxyvinyl)-3-phosphoshikimate = chorismate + phosphate. It participates in metabolic intermediate biosynthesis; chorismate biosynthesis; chorismate from D-erythrose 4-phosphate and phosphoenolpyruvate: step 7/7. Its function is as follows. Catalyzes the anti-1,4-elimination of the C-3 phosphate and the C-6 proR hydrogen from 5-enolpyruvylshikimate-3-phosphate (EPSP) to yield chorismate, which is the branch point compound that serves as the starting substrate for the three terminal pathways of aromatic amino acid biosynthesis. This reaction introduces a second double bond into the aromatic ring system. The protein is Chorismate synthase of Brevibacillus brevis (strain 47 / JCM 6285 / NBRC 100599).